The chain runs to 449 residues: Cysteine--tRNA ligase (449 aa).

Residue C29 coordinates Zn(2+). The short motif at 31–41 is the 'HIGH' region element; that stretch reads PTVYDHLHIGN. Zn(2+) contacts are provided by C211, H236, and E240. Residues 269-273 carry the 'KMSKS' region motif; that stretch reads KMSKS. K272 provides a ligand contact to ATP.

The protein belongs to the class-I aminoacyl-tRNA synthetase family. As to quaternary structure, monomer. The cofactor is Zn(2+).

The protein resides in the cytoplasm. The catalysed reaction is tRNA(Cys) + L-cysteine + ATP = L-cysteinyl-tRNA(Cys) + AMP + diphosphate. The sequence is that of Cysteine--tRNA ligase from Methylocella silvestris (strain DSM 15510 / CIP 108128 / LMG 27833 / NCIMB 13906 / BL2).